Reading from the N-terminus, the 252-residue chain is Gastrula zinc finger protein XlCGF28.1 (252 aa).

C2H2-type zinc fingers lie at residues 6-28 (FTCNECGKFFSCTSWLNVHLRSH), 34-56 (FTCSECGKFFSCMSRLKVHFRGH), 62-84 (SACTECEKCFSSISQRNIHIRSH), 90-112 (YTCTVCGKIFTRISQFNVHVRSH), 118-140 (FKCTECGKSFICNSQLNLHLRFH), 146-168 (TTCSECGKCFTHTSHLNVHFRVH), 174-196 (FTCTECGKCLTRQYQLTEHSYLH), 202-224 (YTCTECGKCFTRRYHLTEHSYLH), and 230-252 (FTCTECGKGFTRRSHLKAHSHTH).

The protein belongs to the krueppel C2H2-type zinc-finger protein family.

The protein resides in the nucleus. May be involved in transcriptional regulation. The chain is Gastrula zinc finger protein XlCGF28.1 from Xenopus laevis (African clawed frog).